The chain runs to 983 residues: UPF0182 protein MLBr00644 (983 aa).

Transmembrane regions (helical) follow at residues 19-39 (LIMV…LVDA), 63-83 (VVVF…GLAV), 113-133 (LIGV…AQSY), 175-195 (FVAV…FGGI), 210-230 (LQLV…YWLD), 259-279 (KLIL…AITL), and 287-307 (IGLV…PLIV).

Belongs to the UPF0182 family.

The protein localises to the cell membrane. This is UPF0182 protein MLBr00644 from Mycobacterium leprae (strain Br4923).